The chain runs to 1005 residues: Vacuolar membrane protease (1005 aa).

The Cytoplasmic segment spans residues 1-14 (MAKETTARSILGYQ). A helical membrane pass occupies residues 15-35 (TLPTTALIALIYVVAFFSVLV). At 36–353 (SDQLPSIPHP…PEDSAKQKSK (318 aa)) the chain is on the vacuolar side. An N-linked (GlcNAc...) asparagine glycan is attached at Asn107. His152 and Asp164 together coordinate Zn(2+). Catalysis depends on Glu196, which acts as the Proton acceptor. Residue Glu197 participates in Zn(2+) binding. Asn213 carries N-linked (GlcNAc...) asparagine glycosylation. Positions 222 and 311 each coordinate Zn(2+). The helical transmembrane segment at 354-374 (PGVYFDRPVVLALLWAIGAVL) threads the bilayer. Over 375-448 (KHNAGSPPPP…LITVWKQASF (74 aa)) the chain is Cytoplasmic. Positions 379 to 420 (GSPPPPPKPTVPHSANNASAGTGRPGASTRQPTRSFGSNEDA) are disordered. Over residues 406–419 (STRQPTRSFGSNED) the composition is skewed to polar residues. Residues 449 to 469 (WIALIVTVGLQALLAWGYVAI) form a helical membrane-spanning segment. At 470–479 (NPFTIYSRPY) the chain is on the vacuolar side. Residues 480–500 (FVLLSFFALSFFSMTLVLQAA) form a helical membrane-spanning segment. Over 501–519 (FPSSPVKHAIEVREQEKTT) the chain is Cytoplasmic. The helical transmembrane segment at 520-540 (ILLHLHLLSWIALLLSTILIG) threads the bilayer. Residues 541 to 543 (KSQ) are Vacuolar-facing. The chain crosses the membrane as a helical span at residues 544–564 (VGSFYVVTVWYLGIWAATVIG). The Cytoplasmic portion of the chain corresponds to 565–644 (TLQPILVSKR…RKTNSKSKED (80 aa)). The interval 577–640 (DKGKRRARRS…ASNRRKTNSK (64 aa)) is disordered. A compositionally biased stretch (low complexity) spans 588 to 606 (SASTSSSSSSSSSSSSGSD). The helical transmembrane segment at 645-665 (GAIGWWIAQVLLTVPPVVMLV) threads the bilayer. The Vacuolar portion of the chain corresponds to 666–686 (GQITSIVLEAMNQTLTDGNSA). N-linked (GlcNAc...) asparagine glycosylation is present at Asn677. Residues 687 to 707 (WSIYLLTALLATMLVLPVAPF) form a helical membrane-spanning segment. Residues 708-713 (SPKLHR) are Cytoplasmic-facing. A helical transmembrane segment spans residues 714–734 (GLIFLSAAVFVGFTIYLWVVF). The Vacuolar segment spans residues 735–1005 (PFTRQDPFKV…VEASAPFTVV (271 aa)). N-linked (GlcNAc...) asparagine glycans are attached at residues Asn761 and Asn961.

The protein belongs to the peptidase M28 family. It depends on Zn(2+) as a cofactor.

The protein resides in the vacuole membrane. In terms of biological role, may be involved in vacuolar sorting and osmoregulation. The polypeptide is Vacuolar membrane protease (Coprinopsis cinerea (strain Okayama-7 / 130 / ATCC MYA-4618 / FGSC 9003) (Inky cap fungus)).